We begin with the raw amino-acid sequence, 122 residues long: Large ribosomal subunit protein uL14 (122 aa).

The protein belongs to the universal ribosomal protein uL14 family. In terms of assembly, part of the 50S ribosomal subunit. Forms a cluster with proteins L3 and L19. In the 70S ribosome, L14 and L19 interact and together make contacts with the 16S rRNA in bridges B5 and B8.

Functionally, binds to 23S rRNA. Forms part of two intersubunit bridges in the 70S ribosome. This Phenylobacterium zucineum (strain HLK1) protein is Large ribosomal subunit protein uL14.